The chain runs to 165 residues: Methyl-coenzyme M reductase II operon protein D (165 aa).

As to quaternary structure, MCR is composed of three subunits: alpha, beta, and gamma. The function of protein D is not known.

The chain is Methyl-coenzyme M reductase II operon protein D (mrtD) from Methanothermus fervidus (strain ATCC 43054 / DSM 2088 / JCM 10308 / V24 S).